A 310-amino-acid chain; its full sequence is Methionyl-tRNA formyltransferase (310 aa).

109 to 112 (SLLP) is a binding site for (6S)-5,6,7,8-tetrahydrofolate.

The protein belongs to the Fmt family.

It catalyses the reaction L-methionyl-tRNA(fMet) + (6R)-10-formyltetrahydrofolate = N-formyl-L-methionyl-tRNA(fMet) + (6S)-5,6,7,8-tetrahydrofolate + H(+). Functionally, attaches a formyl group to the free amino group of methionyl-tRNA(fMet). The formyl group appears to play a dual role in the initiator identity of N-formylmethionyl-tRNA by promoting its recognition by IF2 and preventing the misappropriation of this tRNA by the elongation apparatus. This chain is Methionyl-tRNA formyltransferase, found in Pseudomonas putida (strain ATCC 700007 / DSM 6899 / JCM 31910 / BCRC 17059 / LMG 24140 / F1).